Consider the following 122-residue polypeptide: Small ribosomal subunit protein uS13 (122 aa).

The interval 96-122 (LPCRGQRTHTNARTRKGPRKPIAGKKK) is disordered.

Belongs to the universal ribosomal protein uS13 family. As to quaternary structure, part of the 30S ribosomal subunit. Forms a loose heterodimer with protein S19. Forms two bridges to the 50S subunit in the 70S ribosome.

Located at the top of the head of the 30S subunit, it contacts several helices of the 16S rRNA. In the 70S ribosome it contacts the 23S rRNA (bridge B1a) and protein L5 of the 50S subunit (bridge B1b), connecting the 2 subunits; these bridges are implicated in subunit movement. Contacts the tRNAs in the A and P-sites. The sequence is that of Small ribosomal subunit protein uS13 from Magnetococcus marinus (strain ATCC BAA-1437 / JCM 17883 / MC-1).